The sequence spans 319 residues: mRNA decay activator protein ZFP36 (319 aa).

Positions 1 to 15 are necessary for nuclear export; it reads MDLSAIYESLQSMSH. The segment at 1 to 92 is necessary and sufficient for the association with mRNA decay enzymes and mRNA decay activation; that stretch reads MDLSAIYESL…PTSPTATPTT (92 aa). 2 necessary for localization of ARE-containing mRNAs to processing bodies (PBs) regions span residues 1–166 and 92–319; these read MDLS…DLAL and TSSR…SVSE. Ser-52 bears the Phosphoserine; by MAPKAPK2 mark. Residue Ser-58 is modified to Phosphoserine. The stretch at 63–67 is one P-P-P-P-G repeat; sequence PPPPG. Positions 65–84 are enriched in pro residues; the sequence is PPGFAPLAPRPGPELSPSPT. The segment at 65-95 is disordered; sequence PPGFAPLAPRPGPELSPSPTSPTATPTTSSR. Phosphoserine is present on residues Ser-80 and Ser-82. Thr-84 is subject to Phosphothreonine. Phosphoserine is present on Ser-85. Residues 85-94 are compositionally biased toward low complexity; it reads SPTATPTTSS. The tract at residues 87 to 160 is necessary for nuclear localization; the sequence is TATPTTSSRY…GSRCHFIHNP (74 aa). Residues 89–165 are necessary for RNA-binding; the sequence is TPTTSSRYKT…FIHNPTEDLA (77 aa). C3H1-type zinc fingers lie at residues 95 to 123 and 133 to 161; these read RYKT…HGLG and KYKT…HNPT. The tract at residues 95 to 186 is necessary for interaction with PABPN1; sequence RYKTELCRTY…ISFSGLPSGR (92 aa). The tract at residues 166–319 is necessary for mRNA decay activation; the sequence is LPGQPHVLRQ…PIFNRISVSE (154 aa). Phosphoserine; by MAPKAPK2 is present on Ser-178. Residues 179 to 188 are compositionally biased toward low complexity; it reads FSGLPSGRRS. Residues 179-309 are disordered; it reads FSGLPSGRRS…PQTPAPPRRL (131 aa). Ser-189 carries the post-translational modification Phosphoserine. One copy of the P-P-P-P-G repeat lies at 190 to 194; it reads PPPPG. The segment covering 196-208 has biased composition (low complexity); sequence SGPSLSSCSFSPS. Phosphoserine is present on Ser-210. The P-P-P-P-G repeat unit spans residues 211 to 215; that stretch reads PPPPG. At Ser-220 the chain carries Phosphoserine; by MAPK1; in vitro. The residue at position 250 (Thr-250) is a Phosphothreonine. Phosphoserine is present on residues Ser-269, Ser-289, and Ser-316. Residues 279 to 289 are compositionally biased toward low complexity; it reads SSGSSLGGSDS. The segment at 305–319 is interaction with CNOT1; sequence PPRRLPIFNRISVSE.

In terms of assembly, associates with cytoplasmic CCR4-NOT and PAN2-PAN3 deadenylase complexes to trigger ARE-containing mRNA deadenylation and decay processes. Part of a mRNA decay activation complex at least composed of poly(A)-specific exoribonucleases CNOT6, EXOSC2 and XRN1 and mRNA-decapping enzymes DCP1A and DCP2. Associates with the RNA exosome complex. Interacts (via phosphorylated form) with 14-3-3 proteins; these interactions promote exclusion of ZFP36 from cytoplasmic stress granules in response to arsenite treatment in a MAPKAPK2-dependent manner and does not prevent CCR4-NOT deadenylase complex recruitment or ZFP36-induced ARE-containing mRNA deadenylation and decay processes. Interacts with 14-3-3 proteins; these interactions occur in response to rapamycin in an Akt-dependent manner. Interacts with AGO2 and AGO4. Interacts (via C-terminus) with CNOT1; this interaction occurs in a RNA-independent manner and induces mRNA deadenylation. Interacts (via N-terminus) with CNOT6. Interacts with CNOT6L. Interacts (via C-terminus) with CNOT7; this interaction occurs in a RNA-independent manner, induces mRNA deadenylation and is inhibited in a phosphorylation MAPKAPK2-dependent manner. Interacts (via unphosphorylated form) with CNOT8; this interaction occurs in a RNA-independent manner and is inhibited in a phosphorylation MAPKAPK2-dependent manner. Interacts with DCP1A. Interacts (via N-terminus) with DCP2. Interacts with EDC3. Interacts (via N-terminus) with EXOSC2. Interacts with heat shock 70 kDa proteins. Interacts with KHSRP; this interaction increases upon cytokine-induced treatment. Interacts with MAP3K4; this interaction enhances the association with SH3KBP1/CIN85. Interacts with MAPKAPK2; this interaction occurs upon skeletal muscle satellite cell activation. Interacts with NCL. Interacts with NUP214; this interaction increases upon lipopolysaccharide (LPS) stimulation. Interacts with PABPC1; this interaction occurs in a RNA-dependent manner. Interacts (via hypophosphorylated form) with PABPN1 (via RRM domain and C-terminal arginine-rich region); this interaction occurs in the nucleus in a RNA-independent manner, decreases in presence of single-stranded poly(A) RNA-oligomer and in a p38 MAPK-dependent-manner and inhibits nuclear poly(A) tail synthesis. Interacts with PAN2. Interacts (via C3H1-type zinc finger domains) with PKM. Interacts (via C3H1-type zinc finger domains) with nuclear RNA poly(A) polymerase. Interacts with PPP2CA; this interaction occurs in LPS-stimulated cells and induces ZFP36 dephosphorylation, and hence may promote ARE-containing mRNAs decay. Interacts (via C-terminus) with PRR5L (via C-terminus); this interaction may accelerate ZFP36-mediated mRNA decay during stress. Interacts (via C-terminus) with SFN; this interaction occurs in a phosphorylation-dependent manner. Interacts (via extreme C-terminal region) with SH3KBP1/CIN85 (via SH3 domains); this interaction enhances MAP3K4-induced phosphorylation of ZFP36 at Ser-58 and Ser-85 and does not alter neither ZFP36 binding to ARE-containing transcripts nor TNF-alpha mRNA decay. Interacts with XRN1. Interacts (via C-terminus and Ser-178 phosphorylated form) with YWHAB; this interaction occurs in a p38/MAPKAPK2-dependent manner, increases cytoplasmic localization of ZFP36 and protects ZFP36 from Ser-178 dephosphorylation by serine/threonine phosphatase 2A, and hence may be crucial for stabilizing ARE-containing mRNAs. Interacts (via phosphorylated form) with YWHAE. Interacts (via C-terminus) with YWHAG; this interaction occurs in a phosphorylation-dependent manner. Interacts with YWHAH; this interaction occurs in a phosphorylation-dependent manner. Interacts with YWHAQ; this interaction occurs in a phosphorylation-dependent manner. Interacts with (via C-terminus) YWHAZ; this interaction occurs in a phosphorylation-dependent manner. Does not interact with SH3KBP1. Interacts (via the 4EHP-binding motif) with EIF4E2; the interaction is direct. Interacts (via P-P-P-P-G repeats) with GIGYF2; the interaction is direct. Phosphorylated. Phosphorylation at serine and/or threonine residues occurs in a p38 MAPK- and MAPKAPK2-dependent manner. Phosphorylated by MAPKAPK2 at Ser-52 and Ser-178; phosphorylation increases its stability and cytoplasmic localization, promotes binding to 14-3-3 adapter proteins and inhibits the recruitment of cytoplasmic CCR4-NOT and PAN2-PAN3 deadenylase complexes to the mRNA decay machinery, thereby inhibiting ZFP36-induced ARE-containing mRNA deadenylation and decay processes. Phosphorylation by MAPKAPK2 does not impair ARE-containing RNA-binding. Phosphorylated in a MAPKAPK2- and p38 MAPK-dependent manner upon skeletal muscle satellite cell activation; this phosphorylation inhibits ZFP36-mediated mRNA decay activity, and hence stabilizes MYOD1 mRNA. Phosphorylated by MAPK1 upon mitogen stimulation. Phosphorylated at Ser-58 and Ser-85; these phosphorylations increase in a SH3KBP1-dependent manner. Phosphorylated at serine and threonine residues in a pyruvate kinase PKM- and p38 MAPK-dependent manner. Phosphorylation at Ser-52 may participate in the PKM-mediated degradation of ZFP36 in a p38 MAPK-dependent manner. Dephosphorylated by serine/threonine phosphatase 2A at Ser-178. Post-translationally, ubiquitinated; pyruvate kinase (PKM)-dependent ubiquitination leads to proteasomal degradation through a p38 MAPK signaling pathway. As to expression, expressed in skeletal muscle satellite cells. Strongly expressed in differentiated adipocytes compared to preadipocytes (at protein level). Expressed in embryonic stem cells (ESCs). Expressed in heart, placenta, kidney, intestine, liver, lung, thymus, fat and spleen.

It is found in the nucleus. The protein resides in the cytoplasm. Its subcellular location is the cytoplasmic granule. The protein localises to the P-body. Functionally, zinc-finger RNA-binding protein that destabilizes numerous cytoplasmic AU-rich element (ARE)-containing mRNA transcripts by promoting their poly(A) tail removal or deadenylation, and hence provide a mechanism for attenuating protein synthesis. Acts as an 3'-untranslated region (UTR) ARE mRNA-binding adapter protein to communicate signaling events to the mRNA decay machinery. Recruits deadenylase CNOT7 (and probably the CCR4-NOT complex) via association with CNOT1, and hence promotes ARE-mediated mRNA deadenylation. Also functions by recruiting components of the cytoplasmic RNA decay machinery to the bound ARE-containing mRNAs. Self-regulates by destabilizing its own mRNA. Binds to 3'-UTR ARE of numerous mRNAs and of its own mRNA. Plays a role in anti-inflammatory responses; suppresses tumor necrosis factor (TNF)-alpha production by stimulating ARE-mediated TNF-alpha mRNA decay and several other inflammatory ARE-containing mRNAs in interferon (IFN)- and/or lipopolysaccharide (LPS)-induced macrophages. Also plays a role in the regulation of dendritic cell maturation at the post-transcriptional level, and hence operates as part of a negative feedback loop to limit the inflammatory response. Promotes ARE-mediated mRNA decay of hypoxia-inducible factor HIF1A mRNA during the response of endothelial cells to hypoxia. Positively regulates early adipogenesis of preadipocytes by promoting ARE-mediated mRNA decay of immediate early genes (IEGs). Negatively regulates hematopoietic/erythroid cell differentiation by promoting ARE-mediated mRNA decay of the transcription factor STAT5B mRNA. Plays a role in maintaining skeletal muscle satellite cell quiescence by promoting ARE-mediated mRNA decay of the myogenic determination factor MYOD1 mRNA. Also associates with and regulates the expression of non-ARE-containing target mRNAs at the post-transcriptional level, such as MHC class I mRNAs. Participates in association with argonaute RISC catalytic components in the ARE-mediated mRNA decay mechanism; assists microRNA (miRNA) targeting ARE-containing mRNAs. May also play a role in the regulation of cytoplasmic mRNA decapping; enhances decapping of ARE-containing RNAs, in vitro. Involved in the delivery of target ARE-mRNAs to processing bodies (PBs). In addition to its cytosolic mRNA-decay function, affects nuclear pre-mRNA processing. Negatively regulates nuclear poly(A)-binding protein PABPN1-stimulated polyadenylation activity on ARE-containing pre-mRNA during LPS-stimulated macrophages. Also involved in the regulation of stress granule (SG) and P-body (PB) formation and fusion. Plays a role in the regulation of keratinocyte proliferation, differentiation and apoptosis. Plays a role as a tumor suppressor by inhibiting cell proliferation in breast cancer cells. The polypeptide is mRNA decay activator protein ZFP36 (Mus musculus (Mouse)).